The following is a 234-amino-acid chain: Glutathione S-transferase U16 (234 aa).

The GST N-terminal domain occupies 5 to 85 (EEVKLLGVWY…YIDETWNSSA (81 aa)). Glutathione contacts are provided by residues 15 to 16 (SP), 42 to 43 (SK), 56 to 57 (KV), and 69 to 70 (ES). One can recognise a GST C-terminal domain in the interval 92 to 219 (HPYDRALARF…APEIEKVAEF (128 aa)).

It belongs to the GST superfamily. Tau family.

It is found in the cytoplasm. It localises to the cytosol. It carries out the reaction RX + glutathione = an S-substituted glutathione + a halide anion + H(+). Its function is as follows. May be involved in the conjugation of reduced glutathione to a wide number of exogenous and endogenous hydrophobic electrophiles and have a detoxification role against certain herbicides. This is Glutathione S-transferase U16 (GSTU16) from Arabidopsis thaliana (Mouse-ear cress).